Here is a 303-residue protein sequence, read N- to C-terminus: 5'-3' exonuclease (303 aa).

Residues 179-262 (ISPAQWVDVK…LATITTEIEA (84 aa)) enclose the 5'-3' exonuclease domain.

5'-3' exonuclease acting preferentially on double-stranded DNA. In Halalkalibacterium halodurans (strain ATCC BAA-125 / DSM 18197 / FERM 7344 / JCM 9153 / C-125) (Bacillus halodurans), this protein is 5'-3' exonuclease.